The chain runs to 319 residues: Phosphoenolpyruvate transferase (319 aa).

A 7,8-didemethyl-8-hydroxy-5-deazariboflavin-binding site is contributed by Asp-50.

It belongs to the CofD family. As to quaternary structure, homodimer. Requires Mg(2+) as cofactor.

It catalyses the reaction enolpyruvoyl-2-diphospho-5'-guanosine + 7,8-didemethyl-8-hydroxy-5-deazariboflavin = dehydro coenzyme F420-0 + GMP + H(+). The protein operates within cofactor biosynthesis; coenzyme F420 biosynthesis. In terms of biological role, catalyzes the transfer of the phosphoenolpyruvate moiety from enoylpyruvoyl-2-diphospho-5'-guanosine (EPPG) to 7,8-didemethyl-8-hydroxy-5-deazariboflavin (FO) with the formation of dehydro coenzyme F420-0 and GMP. The protein is Phosphoenolpyruvate transferase of Streptomyces coelicolor (strain ATCC BAA-471 / A3(2) / M145).